The sequence spans 163 residues: uncharacterized protein (163 aa).

This is an uncharacterized protein from Haemophilus phage HP1 (strain HP1c1) (Bacteriophage HP1).